The following is an 84-amino-acid chain: Kappa-conotoxin-like Im11.3 (84 aa).

An N-terminal signal peptide occupies residues Met1 to Thr26. Intrachain disulfides connect Cys29–Cys43, Cys36–Cys48, Cys42–Cys51, and Cys47–Cys64. Residues Leu71 to Arg84 constitute a propeptide that is removed on maturation.

It belongs to the conotoxin I2 superfamily. As to expression, expressed by the venom duct.

It localises to the secreted. In terms of biological role, inhibits the vertebrate voltage-gated potassium channels Kv1.1/KCNA1 and Kv1.3/KCNA3. This chain is Kappa-conotoxin-like Im11.3, found in Conus imperialis (Imperial cone).